The chain runs to 67 residues: Probable Sec-independent protein translocase protein TatE (67 aa).

The helical transmembrane segment at 4 to 21 threads the bilayer; the sequence is ISITKLLVIAALVVLLFG. Residues 44–67 form a disordered region; that stretch reads NDDDTGAKTPAASEAPAERLSHKE.

It belongs to the TatA/E family. TatE subfamily.

It is found in the cell inner membrane. Functionally, part of the twin-arginine translocation (Tat) system that transports large folded proteins containing a characteristic twin-arginine motif in their signal peptide across membranes. TatE shares overlapping functions with TatA. This is Probable Sec-independent protein translocase protein TatE from Cronobacter sakazakii (strain ATCC BAA-894) (Enterobacter sakazakii).